The chain runs to 962 residues: Glycine dehydrogenase (decarboxylating) (962 aa).

Lys-709 is modified (N6-(pyridoxal phosphate)lysine).

Belongs to the GcvP family. The glycine cleavage system is composed of four proteins: P, T, L and H. The cofactor is pyridoxal 5'-phosphate.

The enzyme catalyses N(6)-[(R)-lipoyl]-L-lysyl-[glycine-cleavage complex H protein] + glycine + H(+) = N(6)-[(R)-S(8)-aminomethyldihydrolipoyl]-L-lysyl-[glycine-cleavage complex H protein] + CO2. In terms of biological role, the glycine cleavage system catalyzes the degradation of glycine. The P protein binds the alpha-amino group of glycine through its pyridoxal phosphate cofactor; CO(2) is released and the remaining methylamine moiety is then transferred to the lipoamide cofactor of the H protein. The polypeptide is Glycine dehydrogenase (decarboxylating) (Shewanella loihica (strain ATCC BAA-1088 / PV-4)).